A 410-amino-acid chain; its full sequence is Chloride intracellular channel protein 5 (410 aa).

Residues 191–194 (CPFS) carry the G-site motif. Residues 193 to 213 (FSQRLFMILWLKGVVFNVTTV) traverse the membrane as a helical segment. The 141-residue stretch at 260-400 (YPKLAAKHRE…AADSEIELAY (141 aa)) folds into the GST C-terminal domain.

The protein belongs to the chloride channel CLIC family. Component of a multimeric complex consisting of several cytoskeletal proteins, including actin, ezrin, alpha-actinin, gelsolin, and IQGAP1. Interacts with AKAP9. Interacts with TPRN. TPRN, CLIC5 and PTPQR form concentric rings at the base of stereocilia and may form a complex. Interacts with EZR, MYO6 and RDX; the proteins may work together as a complex to stabilize linkages between the plasma membrane and subjacent actin cytoskeleton at the stereocilium base. Widely expressed in both fetal and adult human tissues. Isoform 1 is expressed in renal glomeruli endothelial cells and podocytes (at protein level).

It localises to the cytoplasm. The protein localises to the cytoskeleton. The protein resides in the cell cortex. It is found in the membrane. Its subcellular location is the apical cell membrane. It localises to the mitochondrion. The protein localises to the cell projection. The protein resides in the stereocilium. It is found in the golgi apparatus. Its subcellular location is the microtubule organizing center. It localises to the centrosome. It carries out the reaction chloride(in) = chloride(out). The enzyme catalyses Na(+)(in) = Na(+)(out). The catalysed reaction is K(+)(in) = K(+)(out). With respect to regulation, inhibited by F-actin. Its function is as follows. In the soluble state, catalyzes glutaredoxin-like thiol disulfide exchange reactions with reduced glutathione as electron donor. Can insert into membranes and form non-selective ion channels almost equally permeable to Na(+), K(+) and Cl(-). Required for normal hearing. It is necessary for the formation of stereocilia in the inner ear and normal development of the organ of Corti. May play a role in the regulation of transepithelial ion absorption and secretion. Is required for the development and/or maintenance of the proper glomerular endothelial cell and podocyte architecture. Plays a role in formation of the lens suture in the eye, which is important for normal optical properties of the lens. The protein is Chloride intracellular channel protein 5 of Homo sapiens (Human).